Reading from the N-terminus, the 221-residue chain is UPF0502 protein PSPA7_1674 (221 aa).

The protein belongs to the UPF0502 family.

In Pseudomonas paraeruginosa (strain DSM 24068 / PA7) (Pseudomonas aeruginosa (strain PA7)), this protein is UPF0502 protein PSPA7_1674.